Consider the following 214-residue polypeptide: uncharacterized protein (214 aa).

Positions 1–15 (MRPLILSIFALFLAG) are cleaved as a signal peptide. C16 carries N-palmitoyl cysteine lipidation. C16 carries S-diacylglycerol cysteine lipidation.

It to E.coli YjbF.

It localises to the cell membrane. This is an uncharacterized protein from Escherichia coli (strain K12).